The primary structure comprises 179 residues: Crossover junction endodeoxyribonuclease RuvC (179 aa).

Residues D7 and E67 contribute to the active site. The Mn(2+) site is built by D7 and E67. The DNA-binding loop signature appears at 68–74; sequence DQILRRQ. Catalysis depends on residues H139 and D142. Residue H139 coordinates Mn(2+).

It belongs to the RuvC family. Homodimer which binds Holliday junction (HJ) DNA. The HJ becomes 2-fold symmetrical on binding to RuvC with unstacked arms; it has a different conformation from HJ DNA in complex with RuvA. In the full resolvosome a probable DNA-RuvA(4)-RuvB(12)-RuvC(2) complex forms which resolves the HJ. Requires Mn(2+) as cofactor.

The protein resides in the cytoplasm. The catalysed reaction is Endonucleolytic cleavage at a junction such as a reciprocal single-stranded crossover between two homologous DNA duplexes (Holliday junction).. The RuvA-RuvB-RuvC complex processes Holliday junction (HJ) DNA during genetic recombination and DNA repair. Endonuclease that resolves HJ intermediates. Cleaves cruciform DNA by making single-stranded nicks across the HJ at symmetrical positions within the homologous arms, probably yielding a 5'-phosphate and a 3'-hydroxyl group; requires a central core of homology in the junction. The consensus cleavage sequence is 5'-(G/C)TC(C/G)-3' (a different site than E.coli); cleavage occurs on the 3'-side of the TC dinucleotide at the point of strand exchange. Also resolves nicked HJ intermediates, replication forks and Y-junction DNA in vitro. HJ branch migration catalyzed by RuvA-RuvB allows RuvC to scan DNA until it finds its consensus sequence, where it cleaves and resolves the cruciform DNA. Functionally, binds HJ DNA independently of homologous core or consensus sequence; Mn(2+) is not essential for binding but improves it, while &gt;1.0 mM Mg(2+) inhibit binding. Also binds Y-junction DNA less well. Requires a homologous core to cleave DNA. Another study shows divalent cations (Mn(2+), Mg(2+) and Ca(2+), tested up to 5.0 mM) improve DNA binding considerably over binding in their absence. The polypeptide is Crossover junction endodeoxyribonuclease RuvC (Deinococcus radiodurans (strain ATCC 13939 / DSM 20539 / JCM 16871 / CCUG 27074 / LMG 4051 / NBRC 15346 / NCIMB 9279 / VKM B-1422 / R1)).